The primary structure comprises 592 residues: E3 ubiquitin-protein ligase RNF180 (592 aa).

At 1 to 564 the chain is on the cytoplasmic side; that stretch reads MKRSEESTST…DSRGWWFDMD (564 aa). Residue S231 is modified to Phosphoserine. Positions 282-489 are interaction with ZIC2; sequence QSPPSFDPNM…VFLQTELNNA (208 aa). An RING-type zinc finger spans residues 432 to 474; it reads CAVCLDVYFNPYMCYPCHHIFCEPCLRTLAKDNPASTPCPLCR. The chain crosses the membrane as a helical span at residues 565–585; that stretch reads MVIIYIYSVNWVIGFVVFCFL. The Extracellular portion of the chain corresponds to 586 to 592; sequence CYFFFPF.

As to quaternary structure, interacts with ZIC2. In terms of tissue distribution, brain, kidney, testis and uterus. membrane protein. Nucleus envelope.

The protein localises to the endoplasmic reticulum membrane. It is found in the nucleus envelope. It carries out the reaction S-ubiquitinyl-[E2 ubiquitin-conjugating enzyme]-L-cysteine + [acceptor protein]-L-lysine = [E2 ubiquitin-conjugating enzyme]-L-cysteine + N(6)-ubiquitinyl-[acceptor protein]-L-lysine.. The protein operates within protein modification; protein ubiquitination. In terms of biological role, E3 ubiquitin-protein ligase which promotes polyubiquitination and degradation by the proteasome pathway of ZIC2. The protein is E3 ubiquitin-protein ligase RNF180 (Rnf180) of Mus musculus (Mouse).